A 228-amino-acid polypeptide reads, in one-letter code: Ribosomal RNA small subunit methyltransferase G (228 aa).

S-adenosyl-L-methionine-binding positions include G70, 121–122 (AE), and R138.

Belongs to the methyltransferase superfamily. RNA methyltransferase RsmG family.

Its subcellular location is the cytoplasm. Its function is as follows. Specifically methylates the N7 position of a guanine in 16S rRNA. This chain is Ribosomal RNA small subunit methyltransferase G, found in Thermotoga petrophila (strain ATCC BAA-488 / DSM 13995 / JCM 10881 / RKU-1).